Reading from the N-terminus, the 166-residue chain is Cofilin-1 (166 aa).

The residue at position 2 (alanine 2) is an N-acetylalanine. Serine 3 and serine 8 each carry phosphoserine. The 150-residue stretch at 4–153 (GVAVSDGVIK…KDRCTLAEKL (150 aa)) folds into the ADF-H domain. Lysine 13 carries the post-translational modification N6-acetyllysine. A Phosphothreonine modification is found at threonine 25. A Nuclear localization signal motif is present at residues 30 to 34 (KKRKK). Residue serine 41 is modified to Phosphoserine. Tyrosine 68 bears the Phosphotyrosine mark. Residue lysine 73 is modified to N6-acetyllysine. Lysine 132 is covalently cross-linked (Glycyl lysine isopeptide (Lys-Gly) (interchain with G-Cter in SUMO2)). Position 140 is a phosphotyrosine (tyrosine 140). Lysine 144 carries the post-translational modification N6-acetyllysine. Serine 156 is modified (phosphoserine).

This sequence belongs to the actin-binding proteins ADF family. Can bind G- and F-actin in a 1:1 ratio of cofilin to actin. It is a major component of intranuclear and cytoplasmic actin rods. Interacts with the subcortical maternal complex (SCMC) via interaction with TLE6 and NLRP5. Interacts with C9orf72. Inactivated by phosphorylation on Ser-3. Phosphorylated on Ser-3 in resting cells. Dephosphorylated by PDXP/chronophin; this restores its activity in promoting actin filament depolymerization. The phosphorylation of Ser-24 may prevent recognition of the nuclear localization signal. Phosphorylated via a ARRB1-RAC1-LIMK1-PAK1 cascade upon active ligand stimulation of atypical chemokine receptor ACKR2.

It is found in the nucleus matrix. Its subcellular location is the cytoplasm. The protein resides in the cytoskeleton. It localises to the cell projection. The protein localises to the ruffle membrane. It is found in the lamellipodium membrane. Its subcellular location is the lamellipodium. The protein resides in the growth cone. It localises to the axon. In terms of biological role, binds to F-actin and exhibits pH-sensitive F-actin depolymerizing activity. Important for normal progress through mitosis and normal cytokinesis. In conjunction with the subcortical maternal complex (SCMC), plays an essential role for zygotes to progress beyond the first embryonic cell divisions via regulation of actin dynamics. Required for the centralization of the mitotic spindle and symmetric division of zygotes. Plays a role in the regulation of cell morphology and cytoskeletal organization in epithelial cells. Required for the up-regulation of atypical chemokine receptor ACKR2 from endosomal compartment to cell membrane, increasing its efficiency in chemokine uptake and degradation. Required for neural tube morphogenesis and neural crest cell migration. The sequence is that of Cofilin-1 (Cfl1) from Rattus norvegicus (Rat).